The primary structure comprises 346 residues: Putative agmatine deiminase (346 aa).

Cys333 serves as the catalytic Amidino-cysteine intermediate.

Belongs to the agmatine deiminase family.

The catalysed reaction is agmatine + H2O = N-carbamoylputrescine + NH4(+). The protein is Putative agmatine deiminase of Legionella pneumophila (strain Paris).